The following is a 402-amino-acid chain: MEKLTIRDIDLKGKRVIMRVDFNVPMKDGEITDDTRIVEALPTIKYAIENGAIVILLSHLGRPKGERKPEFSLLPVAKRLSELLGKEVTFIPELYGEIVNEKVKNAKEGDVILLENTRFDKGETKNDPELAKKWAELADIHVNDAFGTAHRAHASNVGIAQYIPSVAGFLMEKEIKFLSKATTNPEKPYVVVLGGAKVSDKIGVITNLLDKADKILIGGAMMFTFLKSLGYNVGSSLVEDDKLDLAKRILEQAKEKGTEIVLPVDTVCAQKIEAGVETKTIDIKDGLPEGWMGLDIGPKTVELFRNSISGAKTIVWNGPMGVFEIEDFSNGTKEVAIAIAEETSKGATTIIGGGDSAAAIAKFGLKDKVSHVSTGGGASLEFLEGKELPGIASIANKKKIEN.

Substrate contacts are provided by residues 21–23 (DFN), R36, 59–62 (HLGR), R118, and R151. ATP contacts are provided by residues K201, G293, E324, and 353–356 (GGDS).

Belongs to the phosphoglycerate kinase family. In terms of assembly, monomer.

The protein resides in the cytoplasm. It carries out the reaction (2R)-3-phosphoglycerate + ATP = (2R)-3-phospho-glyceroyl phosphate + ADP. It participates in carbohydrate degradation; glycolysis; pyruvate from D-glyceraldehyde 3-phosphate: step 2/5. This Thermosipho africanus (strain TCF52B) protein is Phosphoglycerate kinase.